Here is a 159-residue protein sequence, read N- to C-terminus: L-2,4-diaminobutyric acid acetyltransferase (159 aa).

One can recognise an N-acetyltransferase domain in the interval 1–138; sequence MPTKNDGAAV…GNYYTSVDFP (138 aa).

This sequence belongs to the acetyltransferase family. EctA subfamily.

The enzyme catalyses L-2,4-diaminobutanoate + acetyl-CoA = (2S)-4-acetamido-2-aminobutanoate + CoA + H(+). It participates in amine and polyamine biosynthesis; ectoine biosynthesis; L-ectoine from L-aspartate 4-semialdehyde: step 2/3. Its function is as follows. Catalyzes the acetylation of L-2,4-diaminobutyrate (DABA) to gamma-N-acetyl-alpha,gamma-diaminobutyric acid (ADABA) with acetyl coenzyme A. This Virgibacillus pantothenticus protein is L-2,4-diaminobutyric acid acetyltransferase (ectA).